A 151-amino-acid chain; its full sequence is Trivalent organoarsenical cleaving enzyme (151 aa).

Positions 2–118 constitute a VOC domain; that stretch reads SRVQLALRVP…GGEPWEVYVV (117 aa). Gln5 is a binding site for Fe(2+). A roxarsone (III)-binding site is contributed by Asp61. His62 provides a ligand contact to Fe(2+). Roxarsone (III) is bound by residues Cys95 and Cys96. Glu114 lines the Fe(2+) pocket.

Monomer. Fe(2+) serves as cofactor.

The enzyme catalyses methylarsonous acid + AH2 + O2 = arsenite + methanol + A + H(+). It carries out the reaction roxarsone (III) + AH2 + O2 = 4-hydroxy-3-nitrocyclohexa-2,5-dien-1-one + arsenite + A + H(+). The catalysed reaction is nitarsone (III) + AH2 + O2 = 4-nitrocyclohexa-2,5-dien-1-one + arsenite + A + H(+). It catalyses the reaction 4-aminophenylarsonous acid + AH2 + O2 = 4-aminocyclohexa-2,5-dien-1-one + arsenite + A. Its function is as follows. Nonheme iron-dependent dioxygenase that can break carbon-arsenic bonds, playing a role in the detoxification of environmental organoarsenical compounds. Catalyzes the oxygen-dependent demethylation of highly toxic methylarsonous acid (MAs(III)) to arsenite, which can then be exported out of the cell. Can also cleave the C-As bond in several trivalent aromatic arsenicals, including roxarsone (III), nitarsone (III) and (4-aminophenyl)arsonous acid. Organoarsenical degradation by this enzyme is proposed to have a significant impact on the arsenic biogeocycle that maintains a balance between organic and inorganic species. In Thermomonospora curvata (strain ATCC 19995 / DSM 43183 / JCM 3096 / KCTC 9072 / NBRC 15933 / NCIMB 10081 / Henssen B9), this protein is Trivalent organoarsenical cleaving enzyme.